We begin with the raw amino-acid sequence, 448 residues long: MAVELAGPFAEVLRAAAIGPASRLCCALSGGVDSVVTLDLLTRLQPRFGFTLTAVHVHHGLSPHADAWAQFCARLCAARGLTLAIRRVEVPTDTGQGLESAARARRHAELVALPCDWLVFGHHQDDQAETVLFRLFRGSGLRGLGAMAAVEPGQHAMPGKLRPLLDIGRAGIVAYARAAGLEWIEDESNADCRFTRNALRHKVLPVVQAQFPAVAPTLARTAALLREGADLLDDLARLDENACGGPVLAADVFASLPAARAANLLRWQTARMGARAPSRARLGETLRQLREAPGPLRLPLGDLWCCAYQGRVWLERDDEAPLRAHLWCGESSLGWGAGQVRLSQGGGGAALRVAAGEAMLAPPAPGLRMRLGPGRPTRSFKNLCQEAGIPPWLRPRLPVLWVAGEPAWIGGIGIAAQFQCAEGEQGVVPAWVPASAAQQGQHLGQFDR.

An ATP-binding site is contributed by 29–34 (SGGVDS).

It belongs to the tRNA(Ile)-lysidine synthase family.

It localises to the cytoplasm. The catalysed reaction is cytidine(34) in tRNA(Ile2) + L-lysine + ATP = lysidine(34) in tRNA(Ile2) + AMP + diphosphate + H(+). In terms of biological role, ligates lysine onto the cytidine present at position 34 of the AUA codon-specific tRNA(Ile) that contains the anticodon CAU, in an ATP-dependent manner. Cytidine is converted to lysidine, thus changing the amino acid specificity of the tRNA from methionine to isoleucine. The polypeptide is tRNA(Ile)-lysidine synthase (Azoarcus sp. (strain BH72)).